Consider the following 74-residue polypeptide: Progonadoliberin-3 (74 aa).

The signal sequence occupies residues 1–15; it reads VRVVVLALVAQVTLS. Glutamine 16 carries the post-translational modification Pyrrolidone carboxylic acid. Glycine 25 is modified (glycine amide).

This sequence belongs to the GnRH family.

It localises to the secreted. Stimulates the secretion of gonadotropins. This Oncorhynchus tshawytscha (Chinook salmon) protein is Progonadoliberin-3 (gnrh3).